The following is a 164-amino-acid chain: D-aminoacyl-tRNA deacylase (164 aa).

TRNA contacts are provided by Trp-72 and Phe-89. Thr-90 serves as the catalytic Nucleophile. A C-terminal adenosine nucleotide of tRNA motif is present at residues 104 to 107 (HLAK). A Gly-cisPro motif, allows the protein to recognize chirality of D-amino acids motif is present at residues 149 to 150 (GP).

This sequence belongs to the DTD family. Homodimer.

The protein resides in the cytoplasm. It catalyses the reaction glycyl-tRNA(Ala) + H2O = tRNA(Ala) + glycine + H(+). The catalysed reaction is a D-aminoacyl-tRNA + H2O = a tRNA + a D-alpha-amino acid + H(+). It carries out the reaction D-tyrosyl-tRNA(Tyr) + H2O = D-tyrosine + tRNA(Tyr). Functionally, D-aminoacyl-tRNA deacylase, with no observable activity on tRNAs charged with their cognate L-amino acid. Probably acts by rejecting L-amino acids from its binding site rather than specific recognition of D-amino acids. Catalyzes the hydrolysis of D-tyrosyl-tRNA(Tyr), has no activity on correctly charged L-tyrosyl-tRNA(Tyr). Hydrolyzes correctly charged, achiral, glycyl-tRNA(Gly). Deacylates mischarged D.melanogaster and E.coli glycyl-tRNA(Ala). Probably acts via tRNA-based rather than protein-based catalysis. Acts on tRNAs only when the D-amino acid is either attached to the ribose 3'-OH or transferred to the 3'-OH from the 2'-OH through rapid transesterification. Binds a number of other D-amino acids (D-Arg, D-Glu, D-His, D-Lys, D-Ser), suggesting it may also deacylate other mischarged tRNAs. The sequence is that of D-aminoacyl-tRNA deacylase from Plasmodium falciparum (isolate 3D7).